Consider the following 313-residue polypeptide: MSPASPTFFCIGLCVLQVIQTQSGPLPKPSLQAQPSSLVPLGQSVILRCQGPPDVDLYRLEKLKPEKYEDQDFLFIPTMERSNAGRYRCSYQNGSHWSLPSDQLELIATGVYAKPSLSAHPSSAVPQGRDVTLKCQSPYSFDEFVLYKEGDTGSYKRPEKWYRANFPIITVTAAHSGTYRCYSFSSSSPYLWSAPSDPLVLVVTGLSATPSQVPTEESFPVTESSRRPSILPTNKISTTEKPMNITASPEGLSPPFGFAHQHYAKGNLVRICLGATIIIILLGLLAEDWHSRKKCLQHRMRALQRPLPPLPLA.

The signal sequence occupies residues 1–21 (MSPASPTFFCIGLCVLQVIQT). Topologically, residues 22 to 265 (QSGPLPKPSL…FGFAHQHYAK (244 aa)) are extracellular. 2 Ig-like C2-type domains span residues 27–105 (PKPS…DQLE) and 115–197 (PSLS…APSD). A disulfide bond links cysteine 49 and cysteine 89. A glycan (N-linked (GlcNAc...) asparagine) is linked at asparagine 93. A disulfide bridge connects residues cysteine 135 and cysteine 181. The interval 213-236 (VPTEESFPVTESSRRPSILPTNKI) is disordered. Asparagine 244 carries N-linked (GlcNAc...) asparagine glycosylation. The helical transmembrane segment at 266 to 286 (GNLVRICLGATIIIILLGLLA) threads the bilayer. Over 287–313 (EDWHSRKKCLQHRMRALQRPLPPLPLA) the chain is Cytoplasmic.

In terms of assembly, associated with Fc receptor gamma chain. The GPVI:FcRgamma complex is associated with the Src kinase family FYN and LYN. Interacts with TRAF4. Interacts with COL1A1, but not with COL4A4. Megakaryocytes and platelets.

It is found in the cell membrane. Its function is as follows. Collagen receptor involved in collagen-induced platelet adhesion and activation. Plays a key role in platelet procoagulant activity and subsequent thrombin and fibrin formation. This procoagulant function may contribute to arterial and venous thrombus formation. The signaling pathway involves the FcR gamma-chain, the Src kinases (likely FYN or LYN) and SYK, the adapter protein LAT and leads to the activation of PLCG2. This chain is Platelet glycoprotein VI, found in Mus musculus (Mouse).